Here is a 123-residue protein sequence, read N- to C-terminus: UPF0102 protein PSHAa2523 (123 aa).

The protein belongs to the UPF0102 family.

This is UPF0102 protein PSHAa2523 from Pseudoalteromonas translucida (strain TAC 125).